A 377-amino-acid polypeptide reads, in one-letter code: MRNEIQNETAQTDQTQGSMFSFFNLFPFLLPMFEVIKMVVASVASVVYLGFAGVTLSGSAVALAVSTPLFIIFSPILLPAIAATTVLAAGLGGKKVAAAPEASPAASPSLSLLGIPESIKPSNIIPESIKPSNIIPEGIKPSNIKDKIKDTIGKVKNKIKAKKEEKSKGKSEDSSKGKGKSKGEDTTTDDDTTTDEDKHGSGAKHGKGESKHGKGESTHGKGGKHGSEGKHGSGGSSMGGGKHGSGGKHETGGKHGSGGKHESGGSPMGGGKHGSEGKHGSGGASMGGGKHGSGGKHESGGSAMGGGKHGSGGKHGSEGKHGGEGSSMGKNSLSKKKKEFHYRGQAMDASSTSESSDGSSDGSSSDGSSHGSGGKHI.

Residues 1–37 (MRNEIQNETAQTDQTQGSMFSFFNLFPFLLPMFEVIK) form a polar region. The next 3 helical transmembrane spans lie at 16 to 36 (QGSM…FEVI), 38 to 58 (MVVA…TLSG), and 69 to 89 (LFII…VLAA). The hydrophobic stretch occupies residues 38-133 (MVVASVASVV…IIPESIKPSN (96 aa)). Repeat copies occupy residues 115–124 (IPESIKPSNI), 125–134 (IPESIKPSNI), and 135–144 (IPEGIKPSNI). The interval 115-144 (IPESIKPSNIIPESIKPSNIIPEGIKPSNI) is 3 X 10 AA tandem repeats of I-P-E-[SG]-I-K-P-S-N-[IV]. The segment at 158 to 377 (KIKAKKEEKS…SSHGSGGKHI (220 aa)) is disordered. 2 stretches are compositionally biased toward basic and acidic residues: residues 162–185 (KKEE…KGED) and 195–231 (DEDK…EGKH). A 2-1 repeat occupies 196–202 (EDKHGSG). The 2.1 repeat unit spans residues 196–202 (EDKHGSG). The 3 X 6 AA tandem repeats of E-[SD]-[KT]-H-G-[KS]-G stretch occupies residues 196-222 (EDKHGSGAKHGKGESKHGKGESTHGKG). Residues 204–208 (KHGKG) form a 2-2; truncated repeat. 7 consecutive repeat copies span residues 209-215 (ESKHGKG), 216-222 (ESTHGKG), 230-247 (KHGS…GSGG), 260-277 (KHES…GSEG), 278-295 (KHGS…GSGG), 296-313 (KHES…GSGG), and 355-359 (SSDGS). The 4 X 18 AA tandem repeats of K-H-E-S-G-G-[SA]-[PSA]-M-G-G-G-K-H-G-S-[GE]-G stretch occupies residues 230-313 (KHGSGGSSMG…MGGGKHGSGG (84 aa)). The span at 232-244 (GSGGSSMGGGKHG) shows a compositional bias: gly residues. The segment covering 247–263 (GKHETGGKHGSGGKHES) has biased composition (basic and acidic residues). Gly residues-rich tracts occupy residues 280–292 (GSGG…GKHG) and 302–314 (SAMG…SGGK). The segment covering 350–369 (SSTSESSDGSSDGSSSDGSS) has biased composition (low complexity). The 3 X 5 AA tandem repeats of S-S-D-G-S stretch occupies residues 355 to 368 (SSDGSSDGSSSDGS). Residues 360–363 (SDGS) form a 4-2; truncated repeat. A 4-3 repeat occupies 364 to 368 (SSDGS).

Belongs to the oleosin family. As to expression, the full-length protein is found in the tapetal lipid bodies of immature anthers, the proteolytically cleaved C-terminal product is found on the coats of pollen grains. No expression is detected in other flower organs, siliques or seedlings.

It localises to the lipid droplet. It is found in the membrane. Many of the major pollen coat proteins are derived from endoproteolytic cleavage of oleosin-like proteins. The protein is Oleosin-B4 of Brassica napus (Rape).